We begin with the raw amino-acid sequence, 70 residues long: Small ribosomal subunit protein bS21C (70 aa).

This sequence belongs to the bacterial ribosomal protein bS21 family.

The protein is Small ribosomal subunit protein bS21C of Burkholderia pseudomallei (strain 1710b).